Reading from the N-terminus, the 265-residue chain is 4-hydroxy-tetrahydrodipicolinate reductase (265 aa).

Residues 7-12 and aspartate 33 contribute to the NAD(+) site; that span reads GASGRM. Arginine 34 is a binding site for NADP(+). Residues 96–98 and 120–123 each bind NAD(+); these read GTT and AANM. Histidine 153 functions as the Proton donor/acceptor in the catalytic mechanism. Histidine 154 provides a ligand contact to (S)-2,3,4,5-tetrahydrodipicolinate. Catalysis depends on lysine 157, which acts as the Proton donor. 163–164 lines the (S)-2,3,4,5-tetrahydrodipicolinate pocket; the sequence is GT.

This sequence belongs to the DapB family.

The protein localises to the cytoplasm. It catalyses the reaction (S)-2,3,4,5-tetrahydrodipicolinate + NAD(+) + H2O = (2S,4S)-4-hydroxy-2,3,4,5-tetrahydrodipicolinate + NADH + H(+). The catalysed reaction is (S)-2,3,4,5-tetrahydrodipicolinate + NADP(+) + H2O = (2S,4S)-4-hydroxy-2,3,4,5-tetrahydrodipicolinate + NADPH + H(+). The protein operates within amino-acid biosynthesis; L-lysine biosynthesis via DAP pathway; (S)-tetrahydrodipicolinate from L-aspartate: step 4/4. In terms of biological role, catalyzes the conversion of 4-hydroxy-tetrahydrodipicolinate (HTPA) to tetrahydrodipicolinate. The sequence is that of 4-hydroxy-tetrahydrodipicolinate reductase from Burkholderia ambifaria (strain MC40-6).